A 457-amino-acid polypeptide reads, in one-letter code: Argininosuccinate lyase (457 aa).

Belongs to the lyase 1 family. Argininosuccinate lyase subfamily.

The protein resides in the cytoplasm. The catalysed reaction is 2-(N(omega)-L-arginino)succinate = fumarate + L-arginine. The protein operates within amino-acid biosynthesis; L-arginine biosynthesis; L-arginine from L-ornithine and carbamoyl phosphate: step 3/3. The chain is Argininosuccinate lyase from Histophilus somni (strain 129Pt) (Haemophilus somnus).